A 221-amino-acid chain; its full sequence is MSETAPVAPAAPAPAEKTPVKKKAKKSGVAAGKRKASGPPVSELITKAVAASKERSGVSLAALKKALAAAGYDVEKNNSRIKLGLKSLVSKGTLVQTKGTGASGSFKLNKKAATGEAKPKGKKAGAAKPKKAAGAAKKPKKSTGAATPKKAAKKTPKKVKKPAAAAGTKKVAKSPKKAKAAKPKKPTKSPAKAKAPKPKAAKPKAAKPKATKAKKAVSKKK.

Positions methionine 1 to lysine 17 are enriched in low complexity. The interval methionine 1–serine 42 is disordered. Serine 2 is subject to N-acetylserine. Residue serine 2 is modified to Phosphoserine. Residue lysine 17 is modified to N6-acetyllysine. Residue threonine 18 is modified to Phosphothreonine. A compositionally biased stretch (basic residues) spans valine 20–alanine 36. Residues lysine 35 and lysine 53 each carry the N6-(beta-hydroxybutyryl)lysine modification. The 74-residue stretch at serine 37–lysine 110 folds into the H15 domain. Arginine 55 is modified (citrulline). 3 positions are modified to N6-(beta-hydroxybutyryl)lysine: lysine 65, lysine 86, and lysine 91. Positions serine 87–lysine 221 are disordered. Serine 105 carries the post-translational modification Phosphoserine; by PKC. Lysine 107 is modified (N6-(beta-hydroxybutyryl)lysine). 4 stretches are compositionally biased toward basic residues: residues lysine 120–lysine 141, lysine 150–lysine 161, lysine 170–threonine 187, and lysine 194–lysine 221.

The protein belongs to the histone H1/H5 family. H1 histones are progressively phosphorylated during the cell cycle, becoming maximally phosphorylated during late G2 phase and M phase, and being dephosphorylated sharply thereafter. Post-translationally, citrullination at Arg-55 (H1R54ci) by PADI4 takes place within the DNA-binding site of H1 and results in its displacement from chromatin and global chromatin decondensation, thereby promoting pluripotency and stem cell maintenance.

The protein localises to the nucleus. The protein resides in the chromosome. In terms of biological role, H1 histones bind to linker DNA between nucleosomes forming the macromolecular structure known as the chromatin fiber. H1 histones are necessary for the condensation of nucleosome chains into higher-order structured fibers. Also acts as a regulator of individual gene transcription through chromatin remodeling, nucleosome spacing and DNA methylation. This Bos taurus (Bovine) protein is Histone H1.3.